A 154-amino-acid chain; its full sequence is Interleukin-2 (154 aa).

An N-terminal signal peptide occupies residues 1–20 (MYKMQLLCCIALTLALMANG). An O-linked (GalNAc...) threonine glycan is attached at Thr-23. Cys-78 and Cys-126 are disulfide-bonded.

Belongs to the IL-2 family.

The protein localises to the secreted. Cytokine produced by activated CD4-positive helper T-cells and to a lesser extend activated CD8-positive T-cells and natural killer (NK) cells that plays pivotal roles in the immune response and tolerance. Binds to a receptor complex composed of either the high-affinity trimeric IL-2R (IL2RA/CD25, IL2RB/CD122 and IL2RG/CD132) or the low-affinity dimeric IL-2R (IL2RB and IL2RG). Interaction with the receptor leads to oligomerization and conformation changes in the IL-2R subunits resulting in downstream signaling starting with phosphorylation of JAK1 and JAK3. In turn, JAK1 and JAK3 phosphorylate the receptor to form a docking site leading to the phosphorylation of several substrates including STAT5. This process leads to activation of several pathways including STAT, phosphoinositide-3-kinase/PI3K and mitogen-activated protein kinase/MAPK pathways. Functions as a T-cell growth factor and can increase NK-cell cytolytic activity as well. Promotes strong proliferation of activated B-cells and subsequently immunoglobulin production. Plays a pivotal role in regulating the adaptive immune system by controlling the survival and proliferation of regulatory T-cells, which are required for the maintenance of immune tolerance. Moreover, participates in the differentiation and homeostasis of effector T-cell subsets, including Th1, Th2, Th17 as well as memory CD8-positive T-cells. In Sus scrofa (Pig), this protein is Interleukin-2 (IL2).